A 292-amino-acid polypeptide reads, in one-letter code: Short chain dehydrogenase/reductase CPUR_05418 (292 aa).

NADP(+) is bound by residues isoleucine 44 and arginine 156. Catalysis depends on proton donor residues serine 172 and tyrosine 186. Residues tyrosine 186, lysine 190, isoleucine 221, and threonine 223 each contribute to the NADP(+) site. Lysine 190 (lowers pKa of active site Tyr) is an active-site residue.

Belongs to the short-chain dehydrogenases/reductases (SDR) family.

The protein operates within secondary metabolite biosynthesis. Short chain dehydrogenase/reductase; part of the ergochrome gene cluster responsible for the typical purple-black color of the ergot sclerotia. The ergochrome gene cluster produces several ergot pigments including the yellow ergochrome secalonic acid and its derivatives, as well as the red anthraquinones endocrocin and clavorubin. The pathway begins with the synthesis of atrochrysone thioester by the polyketide synthase (PKS) CPUR_05437. The atrochrysone carboxyl ACP thioesterase CPUR_05436 then breaks the thioester bond and releases the atrochrysone carboxylic acid from CPUR_05437. The atrochrysone carboxylic acid is then converted to atrochrysone which is further transformed into emodin anthrone. The next step is performed by the anthrone oxygenase CPUR_05434 that catalyzes the oxidation of emodinanthrone to emodin. Emodin is further modified to yield monodictyphenone via several steps involving CPUR_05427, CPUR_05428, CPUR_05429 and CPUR_05430. The short chain dehydrogenase/reductase CPUR_05418 then catalyzes the C-5 ketoreduction to give the xanthone skeleton of the monomeric units. Ergochromes formation requires further dimerization steps of different xanthone units, probably catalyzed by the cytochrome P450 monooxygenase CPUR_05419. CPUR_05425, CPUR_05426 and CPUR_05431 are unique to Claviceps, thus it is likely that they are involved in further modification of xanthone units or in their dimerization. The yellow ergochromes and the red anthraquinone pigments endocrocin and clavorubin are products from the same PKS derived precursors and the latter are likely shunt products in the pathway of xanthone biosynthesis. It is proposed that atrochrysone carboxylic acid released from the PKS CPUR_05437 can also be converted to endocrocin anthrone which is further oxidized into endocrocin by CPUR_05435. Endocrocin could be then modified to clavorubin, possibly by CPUR_05423 and CPUR_05431. Clavorubin is the principal anthraquinone metabolite produced by the cluster with a much higher yield compared to endocrocin. The chain is Short chain dehydrogenase/reductase CPUR_05418 from Claviceps purpurea (strain 20.1) (Ergot fungus).